We begin with the raw amino-acid sequence, 120 residues long: C-C motif chemokine 23 (120 aa).

Residues 1–21 (MKVSVAALSCLMLVTALGSQA) form the signal peptide. Disulfide bonds link Cys54-Cys78, Cys55-Cys94, and Cys65-Cys105.

Belongs to the intercrine beta (chemokine CC) family.

Its subcellular location is the secreted. Its function is as follows. Shows chemotactic activity for monocytes, resting T-lymphocytes, and neutrophils, but not for activated lymphocytes. Inhibits proliferation of myeloid progenitor cells in colony formation assays. This protein can bind heparin. Binds CCR1. The polypeptide is C-C motif chemokine 23 (CCL23) (Macaca mulatta (Rhesus macaque)).